The following is a 261-amino-acid chain: Calbindin (261 aa).

N-acetylalanine is present on alanine 2. The segment at 2-7 (AESHLQ) is interaction with RANBP9. 5 EF-hand domains span residues 11-46 (ITAS…LLQA), 53-88 (ELSP…EENF), 98-133 (KSCE…LLEK), 142-177 (KLAE…QENF), and 186-221 (MCGK…LCEK). Ca(2+)-binding residues include aspartate 24, aspartate 26, serine 28, tyrosine 30, and glutamate 35. Ca(2+) contacts are provided by aspartate 111, aspartate 113, serine 115, glutamate 122, aspartate 155, asparagine 157, aspartate 159, lysine 161, glutamate 166, aspartate 199, aspartate 201, asparagine 203, tyrosine 205, and glutamate 210.

It belongs to the calbindin family. Interacts with RANBP9. As to expression, expressed in the modiolar nerve root and in bushy neurons in the ventral cochlear nucleus (at protein level).

In terms of biological role, buffers cytosolic calcium. May stimulate a membrane Ca(2+)-ATPase and a 3',5'-cyclic nucleotide phosphodiesterase. The polypeptide is Calbindin (Calb1) (Mus musculus (Mouse)).